The primary structure comprises 305 residues: Glycine--tRNA ligase alpha subunit (305 aa).

This sequence belongs to the class-II aminoacyl-tRNA synthetase family. Tetramer of two alpha and two beta subunits.

The protein resides in the cytoplasm. The catalysed reaction is tRNA(Gly) + glycine + ATP = glycyl-tRNA(Gly) + AMP + diphosphate. The sequence is that of Glycine--tRNA ligase alpha subunit from Streptococcus mutans serotype c (strain ATCC 700610 / UA159).